The primary structure comprises 176 residues: Dual-action ribosomal maturation protein DarP (176 aa).

This sequence belongs to the DarP family.

The protein localises to the cytoplasm. In terms of biological role, member of a network of 50S ribosomal subunit biogenesis factors which assembles along the 30S-50S interface, preventing incorrect 23S rRNA structures from forming. Promotes peptidyl transferase center (PTC) maturation. This chain is Dual-action ribosomal maturation protein DarP, found in Haemophilus ducreyi (strain 35000HP / ATCC 700724).